The chain runs to 483 residues: Protein nucleotidyltransferase YdiU (483 aa).

8 residues coordinate ATP: G87, G89, R90, K110, D122, G123, R173, and R180. D249 acts as the Proton acceptor in catalysis. Mg(2+) contacts are provided by N250 and D259. D259 serves as a coordination point for ATP.

It belongs to the SELO family. Mg(2+) is required as a cofactor. The cofactor is Mn(2+).

The catalysed reaction is L-seryl-[protein] + ATP = 3-O-(5'-adenylyl)-L-seryl-[protein] + diphosphate. It carries out the reaction L-threonyl-[protein] + ATP = 3-O-(5'-adenylyl)-L-threonyl-[protein] + diphosphate. It catalyses the reaction L-tyrosyl-[protein] + ATP = O-(5'-adenylyl)-L-tyrosyl-[protein] + diphosphate. The enzyme catalyses L-histidyl-[protein] + UTP = N(tele)-(5'-uridylyl)-L-histidyl-[protein] + diphosphate. The catalysed reaction is L-seryl-[protein] + UTP = O-(5'-uridylyl)-L-seryl-[protein] + diphosphate. It carries out the reaction L-tyrosyl-[protein] + UTP = O-(5'-uridylyl)-L-tyrosyl-[protein] + diphosphate. Functionally, nucleotidyltransferase involved in the post-translational modification of proteins. It can catalyze the addition of adenosine monophosphate (AMP) or uridine monophosphate (UMP) to a protein, resulting in modifications known as AMPylation and UMPylation. The chain is Protein nucleotidyltransferase YdiU from Pelagibacter ubique (strain HTCC1062).